The following is a 231-amino-acid chain: Large ribosomal subunit protein uL1 (231 aa).

Belongs to the universal ribosomal protein uL1 family. As to quaternary structure, part of the 50S ribosomal subunit.

Binds directly to 23S rRNA. The L1 stalk is quite mobile in the ribosome, and is involved in E site tRNA release. In terms of biological role, protein L1 is also a translational repressor protein, it controls the translation of the L11 operon by binding to its mRNA. The chain is Large ribosomal subunit protein uL1 from Pseudomonas entomophila (strain L48).